We begin with the raw amino-acid sequence, 83 residues long: Small ribosomal subunit protein eS21 (83 aa).

It belongs to the eukaryotic ribosomal protein eS21 family. As to quaternary structure, component of the 40S small ribosomal subunit.

It localises to the cytoplasm. The protein resides in the cytosol. The protein localises to the rough endoplasmic reticulum. The protein is Small ribosomal subunit protein eS21 (RpS21) of Ixodes scapularis (Black-legged tick).